We begin with the raw amino-acid sequence, 541 residues long: Chaperonin GroEL 1 (541 aa).

ATP contacts are provided by residues 29–32, 86–90, Gly415, 479–481, and Asp495; these read TIGP, DGTTT, and NAA.

This sequence belongs to the chaperonin (HSP60) family. As to quaternary structure, forms a cylinder of 14 subunits composed of two heptameric rings stacked back-to-back. Interacts with the co-chaperonin GroES.

Its subcellular location is the cytoplasm. It catalyses the reaction ATP + H2O + a folded polypeptide = ADP + phosphate + an unfolded polypeptide.. Its function is as follows. Together with its co-chaperonin GroES, plays an essential role in assisting protein folding. The GroEL-GroES system forms a nano-cage that allows encapsulation of the non-native substrate proteins and provides a physical environment optimized to promote and accelerate protein folding. This Streptomyces coelicolor (strain ATCC BAA-471 / A3(2) / M145) protein is Chaperonin GroEL 1.